Here is a 60-residue protein sequence, read N- to C-terminus: Large ribosomal subunit protein bL32 (60 aa).

The protein belongs to the bacterial ribosomal protein bL32 family.

This Ruminiclostridium cellulolyticum (strain ATCC 35319 / DSM 5812 / JCM 6584 / H10) (Clostridium cellulolyticum) protein is Large ribosomal subunit protein bL32.